Consider the following 186-residue polypeptide: Ribosome-recycling factor (186 aa).

This sequence belongs to the RRF family.

Its subcellular location is the cytoplasm. Functionally, responsible for the release of ribosomes from messenger RNA at the termination of protein biosynthesis. May increase the efficiency of translation by recycling ribosomes from one round of translation to another. This chain is Ribosome-recycling factor, found in Leptothrix cholodnii (strain ATCC 51168 / LMG 8142 / SP-6) (Leptothrix discophora (strain SP-6)).